The primary structure comprises 283 residues: 4-diphosphocytidyl-2-C-methyl-D-erythritol kinase (283 aa).

Residue lysine 10 is part of the active site. 99-109 lines the ATP pocket; the sequence is PMGGGLGGGSS. Residue aspartate 141 is part of the active site.

The protein belongs to the GHMP kinase family. IspE subfamily. As to quaternary structure, homodimer.

The enzyme catalyses 4-CDP-2-C-methyl-D-erythritol + ATP = 4-CDP-2-C-methyl-D-erythritol 2-phosphate + ADP + H(+). The protein operates within isoprenoid biosynthesis; isopentenyl diphosphate biosynthesis via DXP pathway; isopentenyl diphosphate from 1-deoxy-D-xylulose 5-phosphate: step 3/6. In terms of biological role, catalyzes the phosphorylation of the position 2 hydroxy group of 4-diphosphocytidyl-2C-methyl-D-erythritol. The polypeptide is 4-diphosphocytidyl-2-C-methyl-D-erythritol kinase (Shigella dysenteriae serotype 1 (strain Sd197)).